A 262-amino-acid polypeptide reads, in one-letter code: Small ribosomal subunit protein uS3 (262 aa).

The KH type-2 domain maps to 39 to 107; the sequence is VREFLKKKLK…PVHVNIEEIR (69 aa). Residues 211–262 form a disordered region; it reads NDAPVVEEPQEERRKRPGRPEGRRREGEGRPAGQRRGAGAGARRGTDAKTGE. The segment covering 221–239 has biased composition (basic and acidic residues); that stretch reads EERRKRPGRPEGRRREGEG.

This sequence belongs to the universal ribosomal protein uS3 family. In terms of assembly, part of the 30S ribosomal subunit. Forms a tight complex with proteins S10 and S14.

Its function is as follows. Binds the lower part of the 30S subunit head. Binds mRNA in the 70S ribosome, positioning it for translation. The polypeptide is Small ribosomal subunit protein uS3 (Ralstonia pickettii (strain 12J)).